Consider the following 394-residue polypeptide: NADH dehydrogenase [ubiquinone] iron-sulfur protein 2 (394 aa).

It belongs to the complex I 49 kDa subunit family. In terms of assembly, complex I is composed of at least 49 different subunits. This is a component of the iron-sulfur (IP) fragment of the enzyme.

The protein localises to the mitochondrion. The catalysed reaction is a ubiquinone + NADH + 5 H(+)(in) = a ubiquinol + NAD(+) + 4 H(+)(out). Its function is as follows. Core subunit of the mitochondrial membrane respiratory chain NADH dehydrogenase (Complex I) that is believed to belong to the minimal assembly required for catalysis. Complex I functions in the transfer of electrons from NADH to the respiratory chain. The immediate electron acceptor for the enzyme is believed to be ubiquinone. Component of the iron-sulfur (IP) fragment of the enzyme. The polypeptide is NADH dehydrogenase [ubiquinone] iron-sulfur protein 2 (NAD7) (Arabidopsis thaliana (Mouse-ear cress)).